Consider the following 286-residue polypeptide: Pantothenate synthetase (286 aa).

30-37 lines the ATP pocket; that stretch reads MGFLHEGH. H37 acts as the Proton donor in catalysis. Q61 contributes to the (R)-pantoate binding site. A beta-alanine-binding site is contributed by Q61. Residue 147 to 150 participates in ATP binding; that stretch reads GLKD. Q153 is a binding site for (R)-pantoate. Residues V176 and 184–187 each bind ATP; that span reads KSSR.

The protein belongs to the pantothenate synthetase family. As to quaternary structure, homodimer.

Its subcellular location is the cytoplasm. The catalysed reaction is (R)-pantoate + beta-alanine + ATP = (R)-pantothenate + AMP + diphosphate + H(+). It functions in the pathway cofactor biosynthesis; (R)-pantothenate biosynthesis; (R)-pantothenate from (R)-pantoate and beta-alanine: step 1/1. In terms of biological role, catalyzes the condensation of pantoate with beta-alanine in an ATP-dependent reaction via a pantoyl-adenylate intermediate. The chain is Pantothenate synthetase from Bacillus subtilis (strain 168).